Consider the following 480-residue polypeptide: Protein disulfide-isomerase 5-4 (480 aa).

Asn74 and Asn99 each carry an N-linked (GlcNAc...) asparagine glycan. The 144-residue stretch at 120–263 (FHAGEVLSLI…LVKMVVSLVE (144 aa)) folds into the Thioredoxin domain. Active-site nucleophile residues include Cys170 and Cys173. A disulfide bond links Cys170 and Cys173. N-linked (GlcNAc...) asparagine glycans are attached at residues Asn280, Asn326, and Asn376. Residues 439–459 (FSHFITNVCAIIGGVFTVAGI) form a helical membrane-spanning segment.

This sequence belongs to the protein disulfide isomerase family. Widely expressed.

It localises to the membrane. Acts as a protein-folding catalyst that interacts with nascent polypeptides to catalyze the formation, isomerization, and reduction or oxidation of disulfide bonds. The chain is Protein disulfide-isomerase 5-4 (PDIL5-4) from Arabidopsis thaliana (Mouse-ear cress).